A 170-amino-acid chain; its full sequence is 4-hydroxyphenylacetate 3-monooxygenase reductase component (170 aa).

It belongs to the non-flavoprotein flavin reductase family. HpaC subfamily. Homodimer. 4-HPA 3-monooxygenase consists of a reductase component HpaC and an oxygenase component HpaB.

It catalyses the reaction a reduced flavin + NAD(+) = an oxidized flavin + NADH + 2 H(+). It functions in the pathway aromatic compound metabolism; 4-hydroxyphenylacetate degradation; pyruvate and succinate semialdehyde from 4-hydroxyphenylacetate: step 1/7. In terms of biological role, catalyzes the reduction of free flavins (FMN, FAD and riboflavin) by NADH. Subsequently, the reduced flavins diffuse to the large HpaB component or to other electron acceptors such as cytochrome c and Fe(3+) ion. The polypeptide is 4-hydroxyphenylacetate 3-monooxygenase reductase component (hpaC) (Salmonella typhimurium (strain LT2 / SGSC1412 / ATCC 700720)).